Here is a 155-residue protein sequence, read N- to C-terminus: Transcriptional repressor NrdR (155 aa).

A zinc finger lies at 3–34 (CPFCHAEETKVVDSRLVADGAQVRRRRECLEC). The ATP-cone domain maps to 49–139 (PLIIKRDGRR…VYKRFKDVSD (91 aa)).

Belongs to the NrdR family. Zn(2+) is required as a cofactor.

Its function is as follows. Negatively regulates transcription of bacterial ribonucleotide reductase nrd genes and operons by binding to NrdR-boxes. The chain is Transcriptional repressor NrdR from Legionella pneumophila (strain Lens).